Here is a 194-residue protein sequence, read N- to C-terminus: Oligoribonuclease (194 aa).

The region spanning 11 to 174 (LIWIDLEMTG…SDVRDSIDEL (164 aa)) is the Exonuclease domain. The active site involves Tyr-132.

This sequence belongs to the oligoribonuclease family.

It is found in the cytoplasm. Its function is as follows. 3'-to-5' exoribonuclease specific for small oligoribonucleotides. This Xanthomonas euvesicatoria pv. vesicatoria (strain 85-10) (Xanthomonas campestris pv. vesicatoria) protein is Oligoribonuclease.